Consider the following 302-residue polypeptide: Beta-lactamase (302 aa).

Over residues 1 to 11 the composition is skewed to basic residues; that stretch reads MADRRRVHAWA. An N-terminal signal peptide occupies residues 1–29; it reads MADRRRVHAWARARPAAPEPAPPTPSAAA. Residues 1–43 are disordered; that stretch reads MADRRRVHAWARARPAAPEPAPPTPSAAAPSVAPGPAATPPDP. Over residues 26 to 36 the composition is skewed to low complexity; sequence SAAAPSVAPGP. The active-site Acyl-ester intermediate is serine 85. Serine 143 is a substrate binding site. Catalysis depends on glutamate 179, which acts as the Proton acceptor. A substrate-binding site is contributed by 247 to 249; the sequence is KTG.

The protein belongs to the class-A beta-lactamase family.

The protein resides in the secreted. It carries out the reaction a beta-lactam + H2O = a substituted beta-amino acid. Functionally, active on penicillins but not on cephalosporins. The sequence is that of Beta-lactamase (bla) from Amycolatopsis lactamdurans (Nocardia lactamdurans).